The chain runs to 285 residues: MSARILDGRVLAQALRHELAAQIAELRERIDRAPVIAVVQVGEDPAATRYVRSIDRLSQSLGAACRTIILPDVVTQAELEATVSRLSADDRVDGILLQLPLPAGLSLDGVLSRLIPEKDLDGIHPINAGLLAQGRPALIPNTPAGGMELLRRYEIEVRGKRAAVVGRSAIVGRPMALLLLQADATVTICHSRTSDLGAVLRECDIIVAAAGRPQLITAEMIKPGATIIDFGTNVLADGSMVGDVDFAAAVEVAGAITPVPGGTGPVTNVMLIQNLIKATRSRLGI.

NADP(+)-binding positions include 166-168, S191, and T232; that span reads GRS.

This sequence belongs to the tetrahydrofolate dehydrogenase/cyclohydrolase family. In terms of assembly, homodimer.

It carries out the reaction (6R)-5,10-methylene-5,6,7,8-tetrahydrofolate + NADP(+) = (6R)-5,10-methenyltetrahydrofolate + NADPH. The catalysed reaction is (6R)-5,10-methenyltetrahydrofolate + H2O = (6R)-10-formyltetrahydrofolate + H(+). The protein operates within one-carbon metabolism; tetrahydrofolate interconversion. Functionally, catalyzes the oxidation of 5,10-methylenetetrahydrofolate to 5,10-methenyltetrahydrofolate and then the hydrolysis of 5,10-methenyltetrahydrofolate to 10-formyltetrahydrofolate. The protein is Bifunctional protein FolD of Chloroflexus aggregans (strain MD-66 / DSM 9485).